The primary structure comprises 132 residues: Large ribosomal subunit protein uL24 (132 aa).

Belongs to the universal ribosomal protein uL24 family. In terms of assembly, part of the 50S ribosomal subunit.

In terms of biological role, one of two assembly initiator proteins, it binds directly to the 5'-end of the 23S rRNA, where it nucleates assembly of the 50S subunit. Its function is as follows. One of the proteins that surrounds the polypeptide exit tunnel on the outside of the subunit. This chain is Large ribosomal subunit protein uL24, found in Aquifex aeolicus (strain VF5).